The chain runs to 245 residues: DNA repair protein RecO (245 aa).

Belongs to the RecO family.

Involved in DNA repair and RecF pathway recombination. This is DNA repair protein RecO from Pectobacterium atrosepticum (strain SCRI 1043 / ATCC BAA-672) (Erwinia carotovora subsp. atroseptica).